The chain runs to 356 residues: Protein pelota homolog (356 aa).

It belongs to the eukaryotic release factor 1 family. Pelota subfamily. Monomer. Requires a divalent metal cation as cofactor.

Its subcellular location is the cytoplasm. Functionally, may function in recognizing stalled ribosomes, interact with stem-loop structures in stalled mRNA molecules, and effect endonucleolytic cleavage of the mRNA. May play a role in the release non-functional ribosomes and degradation of damaged mRNAs. Has endoribonuclease activity. The protein is Protein pelota homolog of Pyrococcus abyssi (strain GE5 / Orsay).